We begin with the raw amino-acid sequence, 89 residues long: MPILGLGTWQAPPGKVEKAIKLDYLDLYLIHFPMGFKVIPSNTDIRDTWEGMEDLVDAGLVKYTSLIEDPXVKKIADKYNKEYPFHVDY.

Position 31 (His31) interacts with substrate.

This sequence belongs to the aldo/keto reductase family. In terms of assembly, monomer.

This is Rho beta-crystallin from Lepidodactylus lugubris (Mourning gecko).